The chain runs to 159 residues: Cyclic pyranopterin monophosphate synthase (159 aa).

Residues 75-77 and 113-114 contribute to the substrate site; these read LCH and ME. The active site involves aspartate 128.

This sequence belongs to the MoaC family. In terms of assembly, homohexamer; trimer of dimers.

It carries out the reaction (8S)-3',8-cyclo-7,8-dihydroguanosine 5'-triphosphate = cyclic pyranopterin phosphate + diphosphate. It functions in the pathway cofactor biosynthesis; molybdopterin biosynthesis. Catalyzes the conversion of (8S)-3',8-cyclo-7,8-dihydroguanosine 5'-triphosphate to cyclic pyranopterin monophosphate (cPMP). This chain is Cyclic pyranopterin monophosphate synthase, found in Burkholderia multivorans (strain ATCC 17616 / 249).